Reading from the N-terminus, the 1171-residue chain is Pyruvate-flavodoxin oxidoreductase (1171 aa).

4Fe-4S ferredoxin-type domains are found at residues 682 to 711 (EVPV…PALL) and 736 to 767 (YHLA…MQSL). 12 residues coordinate [4Fe-4S] cluster: cysteine 691, cysteine 694, cysteine 697, cysteine 701, cysteine 745, cysteine 748, cysteine 751, cysteine 755, cysteine 811, cysteine 814, cysteine 839, and cysteine 1072.

Belongs to the pyruvate:ferredoxin/flavodoxin oxidoreductase family. Requires [4Fe-4S] cluster as cofactor.

The enzyme catalyses oxidized [flavodoxin] + pyruvate + CoA + 2 H(+) = reduced [flavodoxin] + acetyl-CoA + CO2. Oxidoreductase required for the transfer of electrons from pyruvate to flavodoxin, which reduces nitrogenase. The sequence is that of Pyruvate-flavodoxin oxidoreductase (nifJ) from Klebsiella pneumoniae.